The sequence spans 86 residues: Co-chaperonin GroES (86 aa).

Belongs to the GroES chaperonin family. In terms of assembly, heptamer of 7 subunits arranged in a ring. Interacts with the chaperonin GroEL.

The protein localises to the cytoplasm. Together with the chaperonin GroEL, plays an essential role in assisting protein folding. The GroEL-GroES system forms a nano-cage that allows encapsulation of the non-native substrate proteins and provides a physical environment optimized to promote and accelerate protein folding. GroES binds to the apical surface of the GroEL ring, thereby capping the opening of the GroEL channel. The polypeptide is Co-chaperonin GroES (Campylobacter jejuni subsp. jejuni serotype O:6 (strain 81116 / NCTC 11828)).